The primary structure comprises 690 residues: Subtilisin-like protease 1 (690 aa).

Positions 1–25 are cleaved as a signal peptide; the sequence is MMLNKKVVALCTLTLHLFCIFLCLG. Positions 26-219 are cleaved as a propeptide — inhibition peptide; sequence KEVRSEENGK…IESDKLVSAD (194 aa). Positions 99-131 are disordered; that stretch reads EKNKNDNHNNNNNNNNISSSSSSSSNTFGEEKE. Over residues 106 to 124 the composition is skewed to low complexity; sequence HNNNNNNNNISSSSSSSSN. The N-linked (GlcNAc...) asparagine glycan is linked to Asn-114. Ca(2+) contacts are provided by Asn-147, Thr-150, and Pro-152. An N-linked (GlcNAc...) asparagine glycan is attached at Asn-173. Gly-207 is a Ca(2+) binding site. Asn-263 carries N-linked (GlcNAc...) asparagine glycosylation. Disordered stretches follow at residues 266–286 and 305–334; these read HAATSKRKRHSTNERGYDTFS and NNNNYYYSHSSNGHNSSSRNSSSSRSRPGK. Positions 305–330 are enriched in low complexity; sequence NNNNYYYSHSSNGHNSSSRNSSSSRS. 2 N-linked (GlcNAc...) asparagine glycosylation sites follow: Asn-319 and Asn-324. Glu-340 contributes to the Ca(2+) binding site. Positions 345 to 663 constitute a Peptidase S8 domain; the sequence is QWGLDLSRLD…AGYADINKAV (319 aa). 2 disulfide bridges follow: Cys-371–Cys-481 and Cys-460–Cys-477. Asp-374 functions as the Charge relay system in the catalytic mechanism. Ca(2+)-binding residues include Asp-383, Glu-394, Arg-398, Phe-401, Asp-402, Asp-403, Asp-404, Asn-406, Ile-408, Asp-410, and Asp-411. The N-linked (GlcNAc...) asparagine glycan is linked to Asn-419. His-430 (charge relay system) is an active-site residue. Ca(2+)-binding residues include Ile-441, Asn-444, Ile-446, and Val-448. N-linked (GlcNAc...) asparagine glycosylation is found at Asn-490, Asn-503, and Asn-522. Cys-523 and Cys-536 form a disulfide bridge. The N-linked (GlcNAc...) asparagine glycan is linked to Asn-605. Residue Ser-608 is the Charge relay system of the active site. Residue Asn-677 is glycosylated (N-linked (GlcNAc...) asparagine).

The protein belongs to the peptidase S8 family. Heterodimer between p54 form and prodomain p31; the interaction inhibits p54 catalytic activity. Heterodimer p31-p54 is monomeric at basic pH and dimeric at acidic pH; dimerization is driven by the N-terminal prodomain (p31). It depends on Ca(2+) as a cofactor. The prodomain (p31) is cleaved, probably by autocatalysis, during the transport to or in the Golgi apparatus, and remains non-covalently associated with the p54 form as an inhibitor. p54 is further cleaved into the p47 form. This cleavage is likely occurring in the exoneme prior to egress and is mediated by PMX/plasmepsin X. The p54-to-p47 conversion can be also autocatalytic. Heterodimer p31-p54 is activated by cleavage of prodomain (p31) by the aspartic protease PMX; cleavage by PMX abolishes inhibitory capacity of p31. Primary autocatalytic processing of SUB1 is essential for parasite growth; the p54-to-p47 conversion is dispensable for SUB1 functions in the parasites. Post-translationally, the disulfide bond between Cys-523 and Cys-536 acts as a redox-sensitive disulfide switch. The oxidized form is required for catalytic activity. In terms of processing, the relevance of N-glycosylation is not clear. In an insect expression system, SUB1 glycosylation appears to affect its processing into the active mature form suggesting that SUB1 may not be N-glycosylated in parasites.

Its subcellular location is the secreted. The protein localises to the parasitophorous vacuole lumen. The enzyme catalyses Hydrolysis of proteins with broad specificity for peptide bonds, and a preference for a large uncharged residue in P1. Hydrolyzes peptide amides.. Its activity is regulated as follows. p54 and probably p47 forms are inhibited by the non-covalent interaction with the cleaved propeptide. Inhibited by subtilisin propeptide-like protein SUB1-ProM. Inhibited by 3,4-dichloroisocoumarin (DCI) and 4-(hydroxymercuri)benzoic acid (pHMB). Partially inhibited by chymostatin, leupeptin, phenylmethylsulfonyl fluoride (PMSF), and 4-(2-aminoethyl)benzenesulfonyl fluoride. Functionally, serine protease which plays an essential role in merozoite invasion of and egress from host erythrocytes by processing and activating various merozoite surface and parasitophorous vacuole proteins. Mediates the proteolytic maturation of serine proteases SERA4, SERA5 and SERA6 just prior to merozoite egress. Prior to merozoite egress, cleaves merozoite surface proteins MSP1, MSP6 and MSP7, which form the MSP1/6/7 complex, and thereby may prime the parasite cell surface for invasion of fresh erythrocytes. Prior to merozoite egress, cleaves MSRP2 converting it to MSRP2 p25 form, and RAP1 converting it to RAP1 p67 form. This Plasmodium falciparum protein is Subtilisin-like protease 1.